Reading from the N-terminus, the 212-residue chain is F420-dependent NADP reductase (212 aa).

NADP(+)-binding positions include 9–12 (TGNL), 31–32 (SR), K36, I72, H76, V98, and A137. L207 contributes to the coenzyme F420-(gamma-Glu)n binding site.

The protein belongs to the F420-dependent NADP reductase family. As to quaternary structure, homodimer.

It carries out the reaction reduced coenzyme F420-(gamma-L-Glu)(n) + NADP(+) = oxidized coenzyme F420-(gamma-L-Glu)(n) + NADPH + 2 H(+). Its function is as follows. Catalyzes the reversible reduction of NADP(+) by F420H(2). In this reaction the proS hydrogen at C5 of F420 is transferred into the proS position at C4 of NADPH. The protein is F420-dependent NADP reductase (fno) of Archaeoglobus fulgidus (strain ATCC 49558 / DSM 4304 / JCM 9628 / NBRC 100126 / VC-16).